The sequence spans 141 residues: Keratin-associated protein 19-2 (141 aa).

Residues 5 to 135 (SGYSGGLGYG…CRRSSCCGGY (131 aa)) are 48 X 2 AA repeats of G-[YCGS].

This sequence belongs to the KRTAP type 19 family. Interacts with hair keratins. Strong expression in narrowly defined pattern restricted to the lower and middle cortical regions of the hair shaft in both developing and cycling hair. During hair follicle regression (catagen), expression levels decrease until expression is no longer detectable in follicles at resting stage (telogen).

Functionally, in the hair cortex, hair keratin intermediate filaments are embedded in an interfilamentous matrix, consisting of hair keratin-associated proteins (KRTAP), which are essential for the formation of a rigid and resistant hair shaft through their extensive disulfide bond cross-linking with abundant cysteine residues of hair keratins. The matrix proteins include the high-sulfur and high-glycine-tyrosine keratins. The sequence is that of Keratin-associated protein 19-2 (Krtap19-2) from Mus musculus (Mouse).